The primary structure comprises 309 residues: DDRGK domain-containing protein 1 (309 aa).

Residues methionine 1 to aspartate 2 lie on the Lumenal side of the membrane. Residues leucine 3–leucine 23 form a helical membrane-spanning segment. The Cytoplasmic portion of the chain corresponds to glutamine 24 to serine 309. Residues threonine 30–lysine 178 are disordered. Low complexity predominate over residues arginine 53 to aspartate 84. A compositionally biased stretch (acidic residues) spans alanine 85–aspartate 95. The segment covering leucine 107–lysine 178 has biased composition (basic and acidic residues).

Belongs to the DDRGK1 family. In terms of assembly, interacts with Atg9; the interaction is transient.

It localises to the endoplasmic reticulum membrane. Substrate adapter for ufmylation, the covalent attachment of the ubiquitin-like modifier UFM1 to substrate proteins. Required for ufmylation of Atg9; protects the nervous system during aging, possibly by stabilizing Atg9 and supporting its function. This is DDRGK domain-containing protein 1 from Drosophila persimilis (Fruit fly).